Here is a 238-residue protein sequence, read N- to C-terminus: Survival of motor neuron-related-splicing factor 30 (238 aa).

The Tudor domain occupies 72-132; that stretch reads SWKVGDKCMA…KPVEEGRKAK (61 aa). The Nuclear localization signal motif lies at 142 to 160; sequence KKEMIAQQREYKKKKALKK. S201 is subject to Phosphoserine. K219 is modified (N6-acetyllysine).

This sequence belongs to the SMN family. Associates with spliceosomes. Associates with U4/U5/U6 tri-snRNP and with U2 snRNP.

The protein localises to the nucleus speckle. It is found in the nucleus. The protein resides in the cajal body. In terms of biological role, involved in spliceosome assembly. This is Survival of motor neuron-related-splicing factor 30 (SMNDC1) from Pongo abelii (Sumatran orangutan).